The primary structure comprises 629 residues: DNA-directed RNA polymerase subunit beta' (629 aa).

Residues Cys-70, Cys-72, Cys-85, and Cys-88 each coordinate Zn(2+). Mg(2+)-binding residues include Asp-472, Asp-474, and Asp-476.

This sequence belongs to the RNA polymerase beta' chain family. RpoC1 subfamily. As to quaternary structure, in plastids the minimal PEP RNA polymerase catalytic core is composed of four subunits: alpha, beta, beta', and beta''. When a (nuclear-encoded) sigma factor is associated with the core the holoenzyme is formed, which can initiate transcription. It depends on Mg(2+) as a cofactor. Zn(2+) is required as a cofactor.

It localises to the plastid. The protein resides in the chloroplast. It carries out the reaction RNA(n) + a ribonucleoside 5'-triphosphate = RNA(n+1) + diphosphate. Its function is as follows. DNA-dependent RNA polymerase catalyzes the transcription of DNA into RNA using the four ribonucleoside triphosphates as substrates. The chain is DNA-directed RNA polymerase subunit beta' from Pyropia yezoensis (Susabi-nori).